Consider the following 353-residue polypeptide: Protein pelota homolog (353 aa).

Belongs to the eukaryotic release factor 1 family. Pelota subfamily. As to quaternary structure, monomer. It depends on a divalent metal cation as a cofactor.

It localises to the cytoplasm. Its function is as follows. May function in recognizing stalled ribosomes, interact with stem-loop structures in stalled mRNA molecules, and effect endonucleolytic cleavage of the mRNA. May play a role in the release non-functional ribosomes and degradation of damaged mRNAs. Has endoribonuclease activity. The protein is Protein pelota homolog of Methanobrevibacter smithii (strain ATCC 35061 / DSM 861 / OCM 144 / PS).